Here is a 292-residue protein sequence, read N- to C-terminus: NAD kinase (292 aa).

The Proton acceptor role is filled by D73. Residues 73–74, 147–148, H158, R175, D177, 188–193, and Q247 contribute to the NAD(+) site; these read DG, NE, and TAYSLS.

Belongs to the NAD kinase family. The cofactor is a divalent metal cation.

Its subcellular location is the cytoplasm. The catalysed reaction is NAD(+) + ATP = ADP + NADP(+) + H(+). Its function is as follows. Involved in the regulation of the intracellular balance of NAD and NADP, and is a key enzyme in the biosynthesis of NADP. Catalyzes specifically the phosphorylation on 2'-hydroxyl of the adenosine moiety of NAD to yield NADP. In Escherichia coli O7:K1 (strain IAI39 / ExPEC), this protein is NAD kinase.